The sequence spans 125 residues: MIYGIGTDIVSLKRIVRLSKKFGQAFAERILTPEELLEFPQAGKPVNYLAKRFAAKEAFAKAVGTGIRGAVSFRNIGIGHDALGKPEFFYAPALSKWLEEQGISRVSLSMSDEEDTVLAFAVAEK.

Positions 8 and 57 each coordinate Mg(2+).

This sequence belongs to the P-Pant transferase superfamily. AcpS family. The cofactor is Mg(2+).

It localises to the cytoplasm. The enzyme catalyses apo-[ACP] + CoA = holo-[ACP] + adenosine 3',5'-bisphosphate + H(+). Its function is as follows. Transfers the 4'-phosphopantetheine moiety from coenzyme A to a Ser of acyl-carrier-protein. The protein is Holo-[acyl-carrier-protein] synthase of Neisseria meningitidis serogroup A / serotype 4A (strain DSM 15465 / Z2491).